We begin with the raw amino-acid sequence, 465 residues long: Alpha-2A adrenergic receptor (465 aa).

At 1–48 the chain is on the extracellular side; sequence MFRQEQPLAEGSFAPMGSLQPDAGNSSWNGTEAPGGGTRATPYSLQVT. N-linked (GlcNAc...) asparagine glycosylation is found at N25 and N29. A helical membrane pass occupies residues 49–74; the sequence is LTLVCLAGLLMLFTVFGNVLVIIAVF. The Cytoplasmic portion of the chain corresponds to 75-85; the sequence is TSRALKAPQNL. The helical transmembrane segment at 86–111 threads the bilayer; it reads FLVSLASADILVATLVIPFSLANEVM. The Extracellular segment spans residues 112-121; the sequence is GYWYFGKVWC. A disulfide bond links C121 and C203. The helical transmembrane segment at 122 to 144 threads the bilayer; it reads EIYLALDVLFCTSSIVHLCAISL. At 145–164 the chain is on the cytoplasmic side; sequence DRYWSITQAIEYNLKRTPRR. The chain crosses the membrane as a helical span at residues 165-188; that stretch reads IKAIIVTVWVISAVISFPPLISIE. The Extracellular portion of the chain corresponds to 189 to 207; that stretch reads KKGAGGGQQPAEPSCKIND. Residues 208–232 traverse the membrane as a helical segment; that stretch reads QKWYVISSSIGSFFAPCLIMILVYV. At 233–389 the chain is on the cytoplasmic side; it reads RIYQIAKRRT…RQNREKRFTF (157 aa). A disordered region spans residues 242 to 377; sequence TRVPPSRRGP…RAGGAKASRW (136 aa). The segment covering 313–330 has biased composition (basic and acidic residues); the sequence is SSEHAERPQGPGKPERGP. Phosphoserine is present on S346. The span at 353-364 shows a compositional bias: gly residues; it reads GAAGPGASGSGQ. R368 bears the Omega-N-methylarginine mark. The chain crosses the membrane as a helical span at residues 390–414; that stretch reads VLAVVIGVFVVCWFPFFFTYTLIAV. Over 415 to 424 the chain is Extracellular; that stretch reads GCPVPYQLFN. A helical membrane pass occupies residues 425–445; the sequence is FFFWFGYCNSSLNPVIYTIFN. The Cytoplasmic segment spans residues 446–465; it reads HDFRRAFKKILCRGDRKRIV. The S-palmitoyl cysteine moiety is linked to residue C457.

This sequence belongs to the G-protein coupled receptor 1 family. Adrenergic receptor subfamily. ADRA2A sub-subfamily. As to expression, expressed in brain.

The protein resides in the cell membrane. In terms of biological role, alpha-2 adrenergic receptors mediate the catecholamine-induced inhibition of adenylate cyclase through the action of G proteins. In Rattus norvegicus (Rat), this protein is Alpha-2A adrenergic receptor.